The following is a 479-amino-acid chain: Glycogen synthase (479 aa).

ADP-alpha-D-glucose is bound at residue lysine 15.

It belongs to the glycosyltransferase 1 family. Bacterial/plant glycogen synthase subfamily.

The enzyme catalyses [(1-&gt;4)-alpha-D-glucosyl](n) + ADP-alpha-D-glucose = [(1-&gt;4)-alpha-D-glucosyl](n+1) + ADP + H(+). It functions in the pathway glycan biosynthesis; glycogen biosynthesis. Synthesizes alpha-1,4-glucan chains using ADP-glucose. This chain is Glycogen synthase, found in Clostridium novyi (strain NT).